Consider the following 318-residue polypeptide: Death effector domain-containing protein (318 aa).

Residues 25 to 103 enclose the DED domain; the sequence is SLHRMFDIVG…RHDLLPYVTL (79 aa). Disordered stretches follow at residues 128–147 and 160–191; these read PRAL…TVPP and QMCS…KEKQ.

Interacts with CASP8, CASP10, KRT8, KRT18, CASP3 and FADD. Homodimerizes and heterodimerizes with DEDD2. Post-translationally, exists predominantly in a mono- or diubiquitinated form. Widely expressed with highest levels in testis.

Its subcellular location is the cytoplasm. It localises to the nucleus. The protein resides in the nucleolus. Its function is as follows. A scaffold protein that directs CASP3 to certain substrates and facilitates their ordered degradation during apoptosis. May also play a role in mediating CASP3 cleavage of KRT18. Regulates degradation of intermediate filaments during apoptosis. May play a role in the general transcription machinery in the nucleus and might be an important regulator of the activity of GTF3C3. Inhibits DNA transcription in vitro. The sequence is that of Death effector domain-containing protein (DEDD) from Homo sapiens (Human).